We begin with the raw amino-acid sequence, 345 residues long: Phosphoribosylformylglycinamidine cyclo-ligase (345 aa).

It belongs to the AIR synthase family.

It is found in the cytoplasm. It carries out the reaction 2-formamido-N(1)-(5-O-phospho-beta-D-ribosyl)acetamidine + ATP = 5-amino-1-(5-phospho-beta-D-ribosyl)imidazole + ADP + phosphate + H(+). The protein operates within purine metabolism; IMP biosynthesis via de novo pathway; 5-amino-1-(5-phospho-D-ribosyl)imidazole from N(2)-formyl-N(1)-(5-phospho-D-ribosyl)glycinamide: step 2/2. The polypeptide is Phosphoribosylformylglycinamidine cyclo-ligase (Mannheimia succiniciproducens (strain KCTC 0769BP / MBEL55E)).